Here is a 267-residue protein sequence, read N- to C-terminus: 2-keto-3-deoxy-L-rhamnonate aldolase (267 aa).

His-49 serves as the catalytic Proton acceptor. Gln-151 is a binding site for substrate. Residue Glu-153 coordinates Mg(2+). Residues Ala-178 and Asp-179 each contribute to the substrate site. Mg(2+) is bound at residue Asp-179.

The protein belongs to the HpcH/HpaI aldolase family. KDR aldolase subfamily. Homohexamer. The cofactor is Mg(2+).

The enzyme catalyses 2-dehydro-3-deoxy-L-rhamnonate = (S)-lactaldehyde + pyruvate. Its function is as follows. Catalyzes the reversible retro-aldol cleavage of 2-keto-3-deoxy-L-rhamnonate (KDR) to pyruvate and lactaldehyde. The protein is 2-keto-3-deoxy-L-rhamnonate aldolase of Salmonella agona (strain SL483).